The primary structure comprises 548 residues: MYIKAEQKPQQFERKNEKLDRNKNQQLPDLETDFKGYRVNSDLYNKERDGSTEETLNSLKFLHKPQRVTQMRANRFPEEEVQRNTDLNKRIFSAGNDENVDNESGWSKIAAAKNHTSVESLNGSTRPPFKIELPPLSPKSTVPKSFQAEYPEAKSPGNDMNFEYDEEILIPFAPPVYKKSGELLKSSLKRRSKSLPTTPGIRSGNGVQARDGSPMLIRSKSVHFDQAAPVKYFAEDESPINVNKTEQHDNCLSFKHKPVNLMVDPEEETKMLSSGLETTSIDDDLTTVAPKGFAHPAKISNPNNGKGTNNTKLRKSKRFQNLLKNRTDMPPSKSNKKFVNGGGAHEISDRNSKNYHVVGLYSKNFPILSNKNPKSLKLNIFINLSQNKKVFLQELSLYIHRDNNYFSNSSSFYNIPNSHNGNDCNGVAKGYNAGCTRLIAGRILVKNIFYDKRVVVRYTWDSWRTTHEVECVYISDGDGILPGTNMDIFHFIIDDVSKVDPRGKLEFCIHYSTRNDYEREEYWDNNNGNNYKVDVVMDGFNDPFAAAA.

A compositionally biased stretch (basic and acidic residues) spans 1–23 (MYIKAEQKPQQFERKNEKLDRNK). Disordered stretches follow at residues 1-54 (MYIK…STEE) and 118-143 (VESLNGSTRPPFKIELPPLSPKSTVP). Position 51 is a phosphoserine (serine 51). At threonine 52 the chain carries Phosphothreonine. Serine 155 is modified (phosphoserine). A disordered region spans residues 191–212 (RSKSLPTTPGIRSGNGVQARDG). Serine 221 and serine 238 each carry phosphoserine. The tract at residues 293–346 (FAHPAKISNPNNGKGTNNTKLRKSKRFQNLLKNRTDMPPSKSNKKFVNGGGAHE) is disordered. A CBM21 domain is found at 419-534 (HNGNDCNGVA…NNNGNNYKVD (116 aa)).

Interacts with phosphatase 1 (GLC7).

This is GLC7-interacting protein 2 (GIP2) from Saccharomyces cerevisiae (strain ATCC 204508 / S288c) (Baker's yeast).